The following is a 520-amino-acid chain: Transactivator/viroplasmin protein (520 aa).

Residues 487–520 are disordered; sequence QNASADSGPKDGPPPTRSIVEKEDVPTTSSKQVD.

The protein belongs to the caulimoviridae viroplasmin family.

The protein resides in the host cytoplasm. Enhances the ribosomal termination-reinitiation event leading to the translation of major open reading frames on the polycistronic viral RNAs. The polypeptide is Transactivator/viroplasmin protein (Arabidopsis thaliana (Mouse-ear cress)).